Here is a 324-residue protein sequence, read N- to C-terminus: Lipoyl synthase, chloroplastic (324 aa).

Low complexity-rich tracts occupy residues 1–12 and 20–29; these read MCGPTATTVANA and KGLPPGLKKP. The tract at residues 1-30 is disordered; that stretch reads MCGPTATTVANAGTGGETIKGLPPGLKKPP. [4Fe-4S] cluster is bound by residues Cys-58, Cys-63, Cys-69, Cys-86, Cys-90, Cys-93, and Ser-302. Positions 72–291 constitute a Radical SAM core domain; that stretch reads GDTGTATVML…AYGEEVIGFR (220 aa).

This sequence belongs to the radical SAM superfamily. Lipoyl synthase family. [4Fe-4S] cluster is required as a cofactor.

Its subcellular location is the plastid. The protein resides in the chloroplast. The enzyme catalyses [[Fe-S] cluster scaffold protein carrying a second [4Fe-4S](2+) cluster] + N(6)-octanoyl-L-lysyl-[protein] + 2 oxidized [2Fe-2S]-[ferredoxin] + 2 S-adenosyl-L-methionine + 4 H(+) = [[Fe-S] cluster scaffold protein] + N(6)-[(R)-dihydrolipoyl]-L-lysyl-[protein] + 4 Fe(3+) + 2 hydrogen sulfide + 2 5'-deoxyadenosine + 2 L-methionine + 2 reduced [2Fe-2S]-[ferredoxin]. It functions in the pathway protein modification; protein lipoylation via endogenous pathway; protein N(6)-(lipoyl)lysine from octanoyl-[acyl-carrier-protein]: step 2/2. Functionally, catalyzes the radical-mediated insertion of two sulfur atoms into the C-6 and C-8 positions of the octanoyl moiety bound to the lipoyl domains of lipoate-dependent enzymes, thereby converting the octanoylated domains into lipoylated derivatives. This Ostreococcus lucimarinus (strain CCE9901) protein is Lipoyl synthase, chloroplastic.